We begin with the raw amino-acid sequence, 258 residues long: Acidic leucine-rich nuclear phosphoprotein 32 family member E (258 aa).

N-acetylmethionine is present on Met-1. 4 LRR repeats span residues 18-38, 43-64, 65-87, and 89-110; these read EVTE…EGLN, ELEF…PSLN, KLRK…AEKC, and NLTY…EALQ. Lys-68 participates in a covalent cross-link: Glycyl lysine isopeptide (Lys-Gly) (interchain with G-Cter in SUMO2). Residues 123–161 form the LRRCT domain; sequence CEITNLEDYRESIFELLQQITYLDGFDQEDNEAPDSEEE. Acidic residues-rich tracts occupy residues 149–206 and 216–238; these read DQED…EEEV and IQDE…EEEE. The disordered stretch occupies residues 149-258; sequence DQEDNEAPDS…AEDDGEEDDD (110 aa). The interval 205 to 258 is ZID domain; it reads EVGLSYLMKEEIQDEEDDDDYVDEGEEEEEEEEEGPRGEKRKRDAEDDGEEDDD. Over residues 239-249 the composition is skewed to basic and acidic residues; that stretch reads GPRGEKRKRDA.

It belongs to the ANP32 family. As to quaternary structure, component of a SWR1-like complex, composed of EP400, KAT5/TIP60, TRRAP, BRD8, RUVBL1, RUVBL2, ING3 and ANP32E; the complex does not contain SRCAP. Interacts with H2A.Z/H2AZ1. Interacts with the importin alpha KPNA1 and KPNA2. Phosphorylated. The phosphorylation is nuclear localization signal (NLS)-dependent.

It is found in the cytoplasm. It localises to the nucleus. Its function is as follows. Histone chaperone that specifically mediates the genome-wide removal of histone H2A.Z/H2AZ1 from the nucleosome: removes H2A.Z/H2AZ1 from its normal sites of deposition, especially from enhancer and insulator regions. Not involved in deposition of H2A.Z/H2AZ1 in the nucleosome. May stabilize the evicted H2A.Z/H2AZ1-H2B dimer, thus shifting the equilibrium towards dissociation and the off-chromatin state. Inhibits activity of protein phosphatase 2A (PP2A). Does not inhibit protein phosphatase 1. May play a role in cerebellar development and synaptogenesis. The protein is Acidic leucine-rich nuclear phosphoprotein 32 family member E (Anp32e) of Rattus norvegicus (Rat).